The following is a 376-amino-acid chain: MFPFCDSSSPMDLPLYQQLQLSPSSPKTDQSSSFYCYPCSPPFAAADASFPLSYQIGSAAAADATPPQAVINSPDLPVQALMDHAPAPATELGACASGAEGSGASLDRAAAAARKDRHSKICTAGGMRDRRMRLSLDVARKFFALQDMLGFDKASKTVQWLLNTSKSAIQEIMADDASSECVEDGSSSLSVDGKHNPAEQLGGGGDQKPKGNCRGEGKKPAKASKAAATPKPPRKSANNAHQVPDKETRAKARERARERTKEKHRMRWVKLASAIDVEAAAASGPSDRPSSNNLSHHSSLSMNMPCAAAELEERERCSSALSNRSAGRMQEITGASDVVLGFGNGGGGYGDGGGNYYCQEQWELGGVVFQQNSRFY.

Residues 114 to 172 (RKDRHSKICTAGGMRDRRMRLSLDVARKFFALQDMLGFDKASKTVQWLLNTSKSAIQEI) enclose the TCP domain. Disordered stretches follow at residues 179-266 (SECV…KHRM) and 280-299 (AAAS…HHSS). Basic and acidic residues-rich tracts occupy residues 207–219 (QKPK…EGKK) and 243–261 (VPDK…ERTK). Residues 246 to 263 (KETRAKARERARERTKEK) enclose the R domain. Positions 290–299 (SSNNLSHHSS) are enriched in low complexity.

In terms of tissue distribution, expressed in axillary inflorescence primordia, immature internodes below these primordia, and immature husk surrounding these primordia.

It localises to the nucleus. Transcription factor. Involved in apical dominance. Represses the growth of axillary organs (e.g. lateral branches), but enables the formation of female inflorescences. Regulates the number and length of axillary branches. This is Transcription factor TEOSINTE BRANCHED 1 (TB1) from Zea mays (Maize).